The sequence spans 327 residues: Undecaprenyl-phosphate 4-deoxy-4-formamido-L-arabinose transferase (327 aa).

Transmembrane regions (helical) follow at residues 235 to 255 and 270 to 290; these read LLSL…VLLV and VFTL…GMGL.

The protein belongs to the glycosyltransferase 2 family.

Its subcellular location is the cell inner membrane. The catalysed reaction is UDP-4-deoxy-4-formamido-beta-L-arabinose + di-trans,octa-cis-undecaprenyl phosphate = 4-deoxy-4-formamido-alpha-L-arabinopyranosyl di-trans,octa-cis-undecaprenyl phosphate + UDP. The protein operates within glycolipid biosynthesis; 4-amino-4-deoxy-alpha-L-arabinose undecaprenyl phosphate biosynthesis; 4-amino-4-deoxy-alpha-L-arabinose undecaprenyl phosphate from UDP-4-deoxy-4-formamido-beta-L-arabinose and undecaprenyl phosphate: step 1/2. Its pathway is bacterial outer membrane biogenesis; lipopolysaccharide biosynthesis. Functionally, catalyzes the transfer of 4-deoxy-4-formamido-L-arabinose from UDP to undecaprenyl phosphate. The modified arabinose is attached to lipid A and is required for resistance to polymyxin and cationic antimicrobial peptides. In Yersinia pestis bv. Antiqua (strain Antiqua), this protein is Undecaprenyl-phosphate 4-deoxy-4-formamido-L-arabinose transferase.